Reading from the N-terminus, the 496-residue chain is Glycogen synthase (496 aa).

Lys-24 provides a ligand contact to ADP-alpha-D-glucose.

This sequence belongs to the glycosyltransferase 1 family. Bacterial/plant glycogen synthase subfamily.

The enzyme catalyses [(1-&gt;4)-alpha-D-glucosyl](n) + ADP-alpha-D-glucose = [(1-&gt;4)-alpha-D-glucosyl](n+1) + ADP + H(+). It participates in glycan biosynthesis; glycogen biosynthesis. In terms of biological role, synthesizes alpha-1,4-glucan chains using ADP-glucose. This chain is Glycogen synthase, found in Nitrosospira multiformis (strain ATCC 25196 / NCIMB 11849 / C 71).